The primary structure comprises 303 residues: Acetylglutamate kinase (303 aa).

Substrate-binding positions include Gly69–Gly70, Arg91, and Asn190.

This sequence belongs to the acetylglutamate kinase family. ArgB subfamily.

Its subcellular location is the cytoplasm. The enzyme catalyses N-acetyl-L-glutamate + ATP = N-acetyl-L-glutamyl 5-phosphate + ADP. It participates in amino-acid biosynthesis; L-arginine biosynthesis; N(2)-acetyl-L-ornithine from L-glutamate: step 2/4. In terms of biological role, catalyzes the ATP-dependent phosphorylation of N-acetyl-L-glutamate. The chain is Acetylglutamate kinase from Nocardia farcinica (strain IFM 10152).